Here is a 392-residue protein sequence, read N- to C-terminus: Chorismate synthase (392 aa).

NADP(+) is bound by residues Arg39 and Arg45. FMN is bound by residues 128 to 130 (RSS), 248 to 249 (QA), Gly300, 315 to 319 (KPIPT), and Arg341.

This sequence belongs to the chorismate synthase family. In terms of assembly, homotetramer. FMNH2 serves as cofactor.

It carries out the reaction 5-O-(1-carboxyvinyl)-3-phosphoshikimate = chorismate + phosphate. Its pathway is metabolic intermediate biosynthesis; chorismate biosynthesis; chorismate from D-erythrose 4-phosphate and phosphoenolpyruvate: step 7/7. Its function is as follows. Catalyzes the anti-1,4-elimination of the C-3 phosphate and the C-6 proR hydrogen from 5-enolpyruvylshikimate-3-phosphate (EPSP) to yield chorismate, which is the branch point compound that serves as the starting substrate for the three terminal pathways of aromatic amino acid biosynthesis. This reaction introduces a second double bond into the aromatic ring system. This chain is Chorismate synthase, found in Trichlorobacter lovleyi (strain ATCC BAA-1151 / DSM 17278 / SZ) (Geobacter lovleyi).